Here is a 1001-residue protein sequence, read N- to C-terminus: TonB-dependent receptor P3 (1001 aa).

The N-terminal stretch at 1–26 (MTTKNNKQLKSVLFMFLLLIGAYVKA) is a signal peptide. The TonB box motif lies at 109 to 116 (EEIVVIGY). The TBDR plug domain maps to 120 to 232 (KKSDVSGSVS…ANGVIMVTTK (113 aa)). The region spanning 238–1001 (KPTLELNTSY…TFTMGLNMKF (764 aa)) is the TBDR beta-barrel domain. The TonB C-terminal box motif lies at 984-1001 (YGSYPNVRTFTMGLNMKF).

Belongs to the TonB-dependent receptor family.

It localises to the cell outer membrane. Its function is as follows. TonB-dependent receptor probably involved in ulvan degradation. Ulvan is the main polysaccharide component of the Ulvales (green seaweed) cell wall. It is composed of disaccharide building blocks comprising 3-sulfated rhamnose (Rha3S) linked to D-glucuronic acid (GlcA), L-iduronic acid (IduA), or D-xylose (Xyl). The TonB-dependent receptor may mediate transport of ulvan oligosaccharides from the surface of the outer membrane to the periplasm for subsequent degradation. This chain is TonB-dependent receptor P3, found in Formosa agariphila (strain DSM 15362 / KCTC 12365 / LMG 23005 / KMM 3901 / M-2Alg 35-1).